The sequence spans 2213 residues: Protein sidekick-1 (2213 aa).

Residues 1 to 73 (MARGARPSAA…GAGRCGGRRA (73 aa)) form a disordered region. Positions 23–38 (AGPGRPRGSPPGRARP) are enriched in low complexity. Ig-like C2-type domains follow at residues 104–186 (PYFK…SEVQ), 191–277 (GSFM…SPFI), 293–378 (PTIV…RATA), 386–476 (PYFT…LDVT), and 480–569 (PVFT…ATLT). Cys126 and Cys169 form a disulfide bridge. Asn271 and Asn301 each carry an N-linked (GlcNAc...) asparagine glycan. Disulfide bonds link Cys315–Cys362, Cys408–Cys458, and Cys501–Cys553. Asn550, Asn563, and Asn572 each carry an N-linked (GlcNAc...) asparagine glycan. Residues 574–663 (TSIVHPPEDH…GNDSRMARLE (90 aa)) form the Ig-like C2-type 6 domain. A disulfide bond links Cys595 and Cys647. 7 N-linked (GlcNAc...) asparagine glycosylation sites follow: Asn655, Asn679, Asn782, Asn821, Asn882, Asn1015, and Asn1024. Fibronectin type-III domains lie at 670 to 766 (SPQN…LPEE), 771 to 867 (PPKN…TLQG), 872 to 970 (PPQN…TQED), 974 to 1068 (AVGH…VPPD), 1072 to 1171 (APSN…TLQA), 1176 to 1274 (APTS…TRES), 1279 to 1376 (APEN…TKDD), 1380 to 1474 (PPVR…TEKR), 1479 to 1576 (PPRE…TLQD), 1581 to 1699 (PPGS…VGEA), 1704 to 1800 (APQN…THQA), 1804 to 1899 (APSF…AGPA), and 1902 to 2000 (SPGS…SAQV). N-linked (GlcNAc...) asparagine glycosylation is found at Asn1282 and Asn1333. N-linked (GlcNAc...) asparagine glycans are attached at residues Asn1654, Asn1748, Asn1767, Asn1819, and Asn1893. Residues 2010–2030 (FLLVMALSSLIVILLVVFALV) traverse the membrane as a helical segment. The Cytoplasmic segment spans residues 2031 to 2213 (LHGQNKKYKN…TPLTGFSSFV (183 aa)). The segment at 2075–2098 (STFSKKNGTRSPPRPSPGGLHYSD) is disordered. Residues 2207 to 2213 (TGFSSFV) carry the PDZ-binding motif.

This sequence belongs to the sidekick family. In terms of assembly, homodimer; mediates homophilic interactions to promote cell adhesion. As to expression, up-regulated in glomeruli in HIV-associated nephropathy. In diseased glomeruli, significantly overexpressed and the expression is no longer restricted to mesangial cells but includes podocytes and parietal epithelial cells.

It localises to the cell membrane. It is found in the synapse. In terms of biological role, adhesion molecule that promotes lamina-specific synaptic connections in the retina. Expressed in specific subsets of interneurons and retinal ganglion cells (RGCs) and promotes synaptic connectivity via homophilic interactions. The chain is Protein sidekick-1 from Homo sapiens (Human).